The primary structure comprises 461 residues: Demethyllactenocin mycarosyltransferase (461 aa).

Residues 1–21 are disordered; sequence MAGLRPGAGVPPGTPWPISPG.

This sequence belongs to the UDP-glycosyltransferase family.

The enzyme catalyses dTDP-beta-L-mycarose + demethyllactenocin = demethylmacrocin + dTDP + H(+). Its function is as follows. Involved in the biosynthesis of mycarose which is a 6-deoxyhexose sugar required during production of the macrolide antibiotic tylosin. Catalyzes the transfer of L-mycarosyl from dTDP-beta-L-mycarose to demethyllactenocin to yield demethylmacrocin. The chain is Demethyllactenocin mycarosyltransferase (tylCV) from Streptomyces fradiae (Streptomyces roseoflavus).